The following is a 356-amino-acid chain: Thymidine kinase (356 aa).

A disordered region spans residues 1 to 29 (MMDSRATYVPPKKISESNSNAEEDPTDCS). 61-68 (GCVGVGKT) lines the ATP pocket. Glu-86 (proton acceptor) is an active-site residue. Gln-122 lines the substrate pocket. ATP is bound at residue Arg-208. Arg-214 lines the substrate pocket.

The protein belongs to the herpesviridae thymidine kinase family. Homodimer.

It carries out the reaction thymidine + ATP = dTMP + ADP + H(+). In terms of biological role, catalyzes the transfer of the gamma-phospho group of ATP to thymidine to generate dTMP in the salvage pathway of pyrimidine synthesis. The dTMP serves as a substrate for DNA polymerase during viral DNA replication. Allows the virus to be reactivated and to grow in non-proliferative cells lacking a high concentration of phosphorylated nucleic acid precursors. The chain is Thymidine kinase from Elephas maximus (Indian elephant).